A 125-amino-acid polypeptide reads, in one-letter code: MPTINQLVRQGREVEKIKSKSPAMENSPQRRGVCTRVYTTTPKKPNSALRKVAKVRLTNGFEIISYIGGEGHNLQEHSVVLVRGGRVKDLPGVRYHIVRGSLDLQGVKDRKQSRSKYGAKRPKKA.

The tract at residues Arg9–Arg31 is disordered. Residue Asp89 is modified to 3-methylthioaspartic acid. The interval Gly106 to Ala125 is disordered. Over residues Ser113–Ala125 the composition is skewed to basic residues.

This sequence belongs to the universal ribosomal protein uS12 family. In terms of assembly, part of the 30S ribosomal subunit. Contacts proteins S8 and S17. May interact with IF1 in the 30S initiation complex.

Its function is as follows. With S4 and S5 plays an important role in translational accuracy. Functionally, interacts with and stabilizes bases of the 16S rRNA that are involved in tRNA selection in the A site and with the mRNA backbone. Located at the interface of the 30S and 50S subunits, it traverses the body of the 30S subunit contacting proteins on the other side and probably holding the rRNA structure together. The combined cluster of proteins S8, S12 and S17 appears to hold together the shoulder and platform of the 30S subunit. The sequence is that of Small ribosomal subunit protein uS12 from Polaromonas sp. (strain JS666 / ATCC BAA-500).